A 247-amino-acid polypeptide reads, in one-letter code: uncharacterized protein (247 aa).

The 146-residue stretch at 102-247 (RSIMSRTNDN…ISEHHYRIKR (146 aa)) folds into the N-acetyltransferase domain.

Belongs to the acetyltransferase family.

This is an uncharacterized protein from Bacillus subtilis (strain 168).